A 495-amino-acid polypeptide reads, in one-letter code: MVYENPDGVRIGLEIHIQLNKLKTKMFCGCSTDYHNAAPNTHTCPICLGLPGTLPVLNKKAVEAAIKVGLALEGEIAEETQFHRKNYFYPDLPKGFQITQYDFPIVSNGKVVIEGEDGEHTVGITRAHMEEDPGKLVHIGSIEKSKGVLIDYNRSGVPLIETVTEPDMRSPKEARRFLDKFRNILEYLDVFDGNLEGAMRVDANVSVHWGTRVEVKNISSHKGVEKALLYEIMRQKNVIRRGGKVSQETRHFDEGRGVTLSMRTKEEAEDYRYFREPDLMPMRITGWIPSIKKTLPELPDAKRARFIEQYGITDMHAKSLTSKIMLADFYESVCAKGVDPKIAATWTADVFLGELNYRDLEISSYDGKKIGFIHAKDPGIKNSIKASDMVELINLFAEGKISDRAAVEVIRTMLDAAEEKTPSQIIEEKGLFKAEDDLVTKAIAETIAENEAAVQDYIGGTEKSLNFLVGQVMKKTKGTADAKTARELIIKELKG.

The protein belongs to the GatB/GatE family. GatB subfamily. Heterotrimer of A, B and C subunits.

It carries out the reaction L-glutamyl-tRNA(Gln) + L-glutamine + ATP + H2O = L-glutaminyl-tRNA(Gln) + L-glutamate + ADP + phosphate + H(+). The enzyme catalyses L-aspartyl-tRNA(Asn) + L-glutamine + ATP + H2O = L-asparaginyl-tRNA(Asn) + L-glutamate + ADP + phosphate + 2 H(+). Allows the formation of correctly charged Asn-tRNA(Asn) or Gln-tRNA(Gln) through the transamidation of misacylated Asp-tRNA(Asn) or Glu-tRNA(Gln) in organisms which lack either or both of asparaginyl-tRNA or glutaminyl-tRNA synthetases. The reaction takes place in the presence of glutamine and ATP through an activated phospho-Asp-tRNA(Asn) or phospho-Glu-tRNA(Gln). This is Aspartyl/glutamyl-tRNA(Asn/Gln) amidotransferase subunit B from Methanosarcina barkeri (strain Fusaro / DSM 804).